The following is a 23-amino-acid chain: Magainin-BM2 (23 aa).

Expressed by the skin glands.

Its subcellular location is the secreted. Its function is as follows. Antimicrobial peptide. In Xenopus boumbaensis (Mawa clawed frog), this protein is Magainin-BM2.